Here is a 228-residue protein sequence, read N- to C-terminus: Putative N-acetylmannosamine-6-phosphate 2-epimerase (228 aa).

The protein belongs to the NanE family.

The catalysed reaction is an N-acyl-D-glucosamine 6-phosphate = an N-acyl-D-mannosamine 6-phosphate. The protein operates within amino-sugar metabolism; N-acetylneuraminate degradation; D-fructose 6-phosphate from N-acetylneuraminate: step 3/5. In terms of biological role, converts N-acetylmannosamine-6-phosphate (ManNAc-6-P) to N-acetylglucosamine-6-phosphate (GlcNAc-6-P). This chain is Putative N-acetylmannosamine-6-phosphate 2-epimerase, found in Mycoplasmopsis pulmonis (strain UAB CTIP) (Mycoplasma pulmonis).